A 264-amino-acid chain; its full sequence is Thiazole synthase (264 aa).

Lys-98 serves as the catalytic Schiff-base intermediate with DXP. Residues Gly-159, 185–186 (AG), and 207–208 (AS) contribute to the 1-deoxy-D-xylulose 5-phosphate site. The segment at 243–264 (HFAEASSPPEGRAHLDPERPAF) is disordered. Residues 253-264 (GRAHLDPERPAF) show a composition bias toward basic and acidic residues.

This sequence belongs to the ThiG family. In terms of assembly, homotetramer. Forms heterodimers with either ThiH or ThiS.

It is found in the cytoplasm. The catalysed reaction is [ThiS sulfur-carrier protein]-C-terminal-Gly-aminoethanethioate + 2-iminoacetate + 1-deoxy-D-xylulose 5-phosphate = [ThiS sulfur-carrier protein]-C-terminal Gly-Gly + 2-[(2R,5Z)-2-carboxy-4-methylthiazol-5(2H)-ylidene]ethyl phosphate + 2 H2O + H(+). It functions in the pathway cofactor biosynthesis; thiamine diphosphate biosynthesis. Catalyzes the rearrangement of 1-deoxy-D-xylulose 5-phosphate (DXP) to produce the thiazole phosphate moiety of thiamine. Sulfur is provided by the thiocarboxylate moiety of the carrier protein ThiS. In vitro, sulfur can be provided by H(2)S. In Streptomyces avermitilis (strain ATCC 31267 / DSM 46492 / JCM 5070 / NBRC 14893 / NCIMB 12804 / NRRL 8165 / MA-4680), this protein is Thiazole synthase.